A 268-amino-acid polypeptide reads, in one-letter code: Shikimate dehydrogenase (NADP(+)) (268 aa).

Shikimate is bound by residues 13-15 (SLS) and Thr-60. Residue Lys-64 is the Proton acceptor of the active site. Asp-76 is an NADP(+) binding site. Shikimate contacts are provided by Asn-85 and Asp-100. Residues 124 to 128 (GAGGA), 148 to 153 (NRTMSR), and Ile-209 each bind NADP(+). A shikimate-binding site is contributed by Tyr-211. Gly-232 is a binding site for NADP(+).

This sequence belongs to the shikimate dehydrogenase family. As to quaternary structure, homodimer.

It carries out the reaction shikimate + NADP(+) = 3-dehydroshikimate + NADPH + H(+). The protein operates within metabolic intermediate biosynthesis; chorismate biosynthesis; chorismate from D-erythrose 4-phosphate and phosphoenolpyruvate: step 4/7. Functionally, involved in the biosynthesis of the chorismate, which leads to the biosynthesis of aromatic amino acids. Catalyzes the reversible NADPH linked reduction of 3-dehydroshikimate (DHSA) to yield shikimate (SA). The polypeptide is Shikimate dehydrogenase (NADP(+)) (Staphylococcus haemolyticus (strain JCSC1435)).